The chain runs to 351 residues: Rhodopsin (351 aa).

Over 1-36 (MNGTEGPFFYIPMVNTTGIVRSPYEYPQYYLVNPAA) the chain is Extracellular. N-linked (GlcNAc...) asparagine glycans are attached at residues asparagine 2 and asparagine 15. A helical membrane pass occupies residues 37-61 (YAILGAYMFFLIIVGFPVNFMTLYV). Topologically, residues 62-73 (TLEHKKLRTPLN) are cytoplasmic. Residues 74–96 (YILLNLAVADLFMVIGGFTTTMY) form a helical membrane-spanning segment. The Extracellular portion of the chain corresponds to 97–110 (TSMHGYFVLGRLGC). Cysteine 110 and cysteine 187 are oxidised to a cystine. The chain crosses the membrane as a helical span at residues 111–133 (NLEGFFATLGGMISLWSLAVLAI). A 'Ionic lock' involved in activated form stabilization motif is present at residues 134–136 (ERW). Residues 134–152 (ERWVVVCKPISNFRFGENH) lie on the Cytoplasmic side of the membrane. A helical membrane pass occupies residues 153-173 (AIMGVSLTWGMALACTVPPLV). Residues 174–202 (GWSRYIPEGMQCSCGIDYYTRAEGFNNES) lie on the Extracellular side of the membrane. N-linked (GlcNAc...) asparagine glycosylation is present at asparagine 200. A helical membrane pass occupies residues 203–224 (FVLYMFFCHFTIPLTIIFFCYG). Topologically, residues 225-252 (RLLCAVKEAAAAQQESETTQRAEREVTR) are cytoplasmic. The chain crosses the membrane as a helical span at residues 253–274 (MVIIMVIGFLVCWLPYASVAWF). The Extracellular portion of the chain corresponds to 275 to 286 (IFTHQGSEFGPL). A helical transmembrane segment spans residues 287 to 308 (FMTIPAFFAKSSSIYNPMIYIC). An N6-(retinylidene)lysine modification is found at lysine 296. The Cytoplasmic segment spans residues 309 to 351 (MNKQFRHCMITTLFCGKNPFEGEEEGASSTKTEASSASSVSPA). Cysteine 323 carries S-palmitoyl cysteine lipidation. The segment at 330–351 (GEEEGASSTKTEASSASSVSPA) is disordered. Positions 335 to 351 (ASSTKTEASSASSVSPA) are enriched in low complexity.

It belongs to the G-protein coupled receptor 1 family. Opsin subfamily. Post-translationally, phosphorylated on some or all of the serine and threonine residues present in the C-terminal region. In terms of processing, contains one covalently linked retinal chromophore.

The protein resides in the membrane. Its subcellular location is the cell projection. It localises to the cilium. It is found in the photoreceptor outer segment. In terms of biological role, photoreceptor required for image-forming vision at low light intensity. While most salt water fish species use retinal as chromophore, most freshwater fish use 3-dehydroretinal, or a mixture of retinal and 3-dehydroretinal. Light-induced isomerization of 11-cis to all-trans retinal triggers a conformational change that activates signaling via G-proteins. Subsequent receptor phosphorylation mediates displacement of the bound G-protein alpha subunit by arrestin and terminates signaling. This Sargocentron diadema (Crown squirrelfish) protein is Rhodopsin (rho).